A 176-amino-acid chain; its full sequence is Endothelin-2 (176 aa).

The first 22 residues, 1 to 22, serve as a signal peptide directing secretion; it reads MVSPAWCSIALALLLALHEGKG. Positions 23-44 are excised as a propeptide; that stretch reads QAAATMEQPASAPKGRGPHLRF. 2 cysteine pairs are disulfide-bonded: cysteine 47-cysteine 61 and cysteine 49-cysteine 57. Positions 68–176 are excised as a propeptide; that stretch reads VNTAGQTAPY…IPAHSRRRKR (109 aa). The segment at 94 to 109 is endothelin-like; it reads CECSSAGDSACATFCH.

The protein belongs to the endothelin/sarafotoxin family.

Its subcellular location is the secreted. In terms of biological role, vasoconstrictor. This is Endothelin-2 (Edn2) from Rattus norvegicus (Rat).